The sequence spans 887 residues: Protein PTHB1 (887 aa).

The segment at 1 to 407 (MSLFKARDWW…SQGVWPMTER (407 aa)) is seven-bladed beta-propeller. Positions 685–765 (KDKTPAPLQH…FLPLQEDTQE (81 aa)) are interaction with LZTL1. The disordered stretch occupies residues 850-887 (DLEERSVEQDSTELFTNHRHLTAETPRPEVSPLQGVSE).

Part of BBSome complex, that contains BBS1, BBS2, BBS4, BBS5, BBS7, BBS8/TTC8, BBS9 and BBIP10. Interacts with LZTL1; the interaction mediates the association of LZTL1 with the BBsome complex and regulates BBSome ciliary trafficking. Widely expressed. Expressed in adult heart, skeletal muscle, lung, liver, kidney, placenta and brain, and in fetal kidney, lung, liver and brain.

The protein resides in the cytoplasm. It is found in the cytoskeleton. It localises to the microtubule organizing center. The protein localises to the centrosome. Its subcellular location is the cell projection. The protein resides in the cilium membrane. It is found in the centriolar satellite. In terms of biological role, the BBSome complex is thought to function as a coat complex required for sorting of specific membrane proteins to the primary cilia. The BBSome complex is required for ciliogenesis but is dispensable for centriolar satellite function. This ciliogenic function is mediated in part by the Rab8 GDP/GTP exchange factor, which localizes to the basal body and contacts the BBSome. Rab8(GTP) enters the primary cilium and promotes extension of the ciliary membrane. Firstly the BBSome associates with the ciliary membrane and binds to RAB3IP/Rabin8, the guanosyl exchange factor (GEF) for Rab8 and then the Rab8-GTP localizes to the cilium and promotes docking and fusion of carrier vesicles to the base of the ciliary membrane. Required for proper BBSome complex assembly and its ciliary localization. The polypeptide is Protein PTHB1 (BBS9) (Homo sapiens (Human)).